The chain runs to 228 residues: Large ribosomal subunit protein uL23m (228 aa).

The disordered stretch occupies residues 194–228 (PEEEGWSEVEENLPLDESAESAAEESSSKGSETRQ). Residues 195 to 216 (EEEGWSEVEENLPLDESAESAA) are compositionally biased toward acidic residues.

This sequence belongs to the universal ribosomal protein uL23 family. In terms of assembly, component of the mitochondrial large ribosomal subunit (mt-LSU). Mature N.crassa 74S mitochondrial ribosomes consist of a small (37S) and a large (54S) subunit. The 37S small subunit contains a 16S ribosomal RNA (16S mt-rRNA) and 32 different proteins. The 54S large subunit contains a 23S rRNA (23S mt-rRNA) and 42 different proteins. uL23m forms the wall of the exit tunnel.

It localises to the mitochondrion. Its function is as follows. Component of the mitochondrial ribosome (mitoribosome), a dedicated translation machinery responsible for the synthesis of mitochondrial genome-encoded proteins, including at least some of the essential transmembrane subunits of the mitochondrial respiratory chain. The mitoribosomes are attached to the mitochondrial inner membrane and translation products are cotranslationally integrated into the membrane. The sequence is that of Large ribosomal subunit protein uL23m (mrp20) from Neurospora crassa (strain ATCC 24698 / 74-OR23-1A / CBS 708.71 / DSM 1257 / FGSC 987).